The following is a 213-amino-acid chain: 3-isopropylmalate dehydratase small subunit (213 aa).

Belongs to the LeuD family. LeuD type 1 subfamily. As to quaternary structure, heterodimer of LeuC and LeuD.

The enzyme catalyses (2R,3S)-3-isopropylmalate = (2S)-2-isopropylmalate. The protein operates within amino-acid biosynthesis; L-leucine biosynthesis; L-leucine from 3-methyl-2-oxobutanoate: step 2/4. Its function is as follows. Catalyzes the isomerization between 2-isopropylmalate and 3-isopropylmalate, via the formation of 2-isopropylmaleate. This chain is 3-isopropylmalate dehydratase small subunit, found in Neisseria meningitidis serogroup C (strain 053442).